Here is a 507-residue protein sequence, read N- to C-terminus: MEELQRYFEIDRFRQQYFIYPFLFQEYIYALAHYYALNGSIFYETMENFGYDNKSSSLIVKRLITRMHRQNRLIISINDSNQNRFIGHSKNLYTQTLSEGFAVIMEIPFSLQLVFSLEEKEITKSHNLRSIHSIFPFFEDKLSHLNHVSHILIPYPAHLEILVQILHSWIQDAPSLHLLRFFLHDYQNSNSLKARKKSISVCSKENRRFFLFIYNFHVYECESVFVFLRKQSFHLRSTSFGTVLERTHFYGKIEHLVVVLRNDFQKTLWFFKDPFMHYVRYQGNSLLASKGTHFHMKKWKSYLVYFWQSHFCLWSQPDRIHINQLYNHSFYFLGFLSNVRQNSSAVRSQMLENSFLIDTSIKKFETLIPTIPLIGSLAKAKFCNVSGHPISKPARADSSDSDIISRFGRIYRNLSHYYSGSSKKQTLYRIKYILRLSCARTLARKHKSTVRAFLKELGSPFLEEFLMEEEQVLSLIFPRTPSPSYRSHRERIWYLDIICINILTNHV.

This sequence belongs to the intron maturase 2 family. MatK subfamily.

The protein resides in the plastid. Its subcellular location is the chloroplast. Functionally, usually encoded in the trnK tRNA gene intron. Probably assists in splicing its own and other chloroplast group II introns. The polypeptide is Maturase K (Asimina triloba (Pawpaw)).